A 366-amino-acid polypeptide reads, in one-letter code: S-adenosylmethionine:tRNA ribosyltransferase-isomerase (366 aa).

The protein belongs to the QueA family. In terms of assembly, monomer.

It localises to the cytoplasm. It carries out the reaction 7-aminomethyl-7-carbaguanosine(34) in tRNA + S-adenosyl-L-methionine = epoxyqueuosine(34) in tRNA + adenine + L-methionine + 2 H(+). It participates in tRNA modification; tRNA-queuosine biosynthesis. Its function is as follows. Transfers and isomerizes the ribose moiety from AdoMet to the 7-aminomethyl group of 7-deazaguanine (preQ1-tRNA) to give epoxyqueuosine (oQ-tRNA). This chain is S-adenosylmethionine:tRNA ribosyltransferase-isomerase, found in Parasynechococcus marenigrum (strain WH8102).